We begin with the raw amino-acid sequence, 584 residues long: Aspartate--tRNA ligase (584 aa).

Glu-169 lines the L-aspartate pocket. Residues 193-196 are aspartate; it reads QLFK. An L-aspartate-binding site is contributed by Arg-215. ATP contacts are provided by residues 215-217 and Gln-224; that span reads RDE. His-446 is an L-aspartate binding site. Glu-480 contributes to the ATP binding site. L-aspartate is bound at residue Arg-487. ATP is bound at residue 532–535; the sequence is GLDR.

This sequence belongs to the class-II aminoacyl-tRNA synthetase family. Type 1 subfamily. As to quaternary structure, homodimer.

The protein resides in the cytoplasm. It catalyses the reaction tRNA(Asp) + L-aspartate + ATP = L-aspartyl-tRNA(Asp) + AMP + diphosphate. Catalyzes the attachment of L-aspartate to tRNA(Asp) in a two-step reaction: L-aspartate is first activated by ATP to form Asp-AMP and then transferred to the acceptor end of tRNA(Asp). This Buchnera aphidicola subsp. Schizaphis graminum (strain Sg) protein is Aspartate--tRNA ligase.